The following is a 359-amino-acid chain: Phospho-N-acetylmuramoyl-pentapeptide-transferase (359 aa).

10 consecutive transmembrane segments (helical) span residues 3–23, 55–75, 84–104, 117–137, 156–176, 190–210, 231–251, 255–275, 283–303, and 330–350; these read QILI…PVLI, VAIV…GVVI, GLLV…DDLI, TAKT…ALQF, IATV…VVSA, LAAG…FWQF, LAII…WNAA, IFMG…LSVT, VVLG…ILAF, and VIIR…ALFY.

It belongs to the glycosyltransferase 4 family. MraY subfamily. It depends on Mg(2+) as a cofactor.

It is found in the cell membrane. The enzyme catalyses UDP-N-acetyl-alpha-D-muramoyl-L-alanyl-gamma-D-glutamyl-meso-2,6-diaminopimeloyl-D-alanyl-D-alanine + di-trans,octa-cis-undecaprenyl phosphate = di-trans,octa-cis-undecaprenyl diphospho-N-acetyl-alpha-D-muramoyl-L-alanyl-D-glutamyl-meso-2,6-diaminopimeloyl-D-alanyl-D-alanine + UMP. Its pathway is cell wall biogenesis; peptidoglycan biosynthesis. Its function is as follows. Catalyzes the initial step of the lipid cycle reactions in the biosynthesis of the cell wall peptidoglycan: transfers peptidoglycan precursor phospho-MurNAc-pentapeptide from UDP-MurNAc-pentapeptide onto the lipid carrier undecaprenyl phosphate, yielding undecaprenyl-pyrophosphoryl-MurNAc-pentapeptide, known as lipid I. The chain is Phospho-N-acetylmuramoyl-pentapeptide-transferase from Mycolicibacterium vanbaalenii (strain DSM 7251 / JCM 13017 / BCRC 16820 / KCTC 9966 / NRRL B-24157 / PYR-1) (Mycobacterium vanbaalenii).